The following is a 163-amino-acid chain: Protein-export protein SecB (163 aa).

The protein belongs to the SecB family. Homotetramer, a dimer of dimers. One homotetramer interacts with 1 SecA dimer.

It is found in the cytoplasm. Its function is as follows. One of the proteins required for the normal export of preproteins out of the cell cytoplasm. It is a molecular chaperone that binds to a subset of precursor proteins, maintaining them in a translocation-competent state. It also specifically binds to its receptor SecA. The chain is Protein-export protein SecB from Caulobacter vibrioides (strain ATCC 19089 / CIP 103742 / CB 15) (Caulobacter crescentus).